Consider the following 51-residue polypeptide: Probable antitoxin PhoAT (51 aa).

Belongs to the PhoAT antitoxin family. In terms of assembly, interacts with toxin PhoH2.

Functionally, antitoxin component of a type II toxin-antitoxin (TA) system. The cognate antitoxin is PhoAT; the toxin gene cannot be expressed in the absence of the antitoxin gene in M.smegmatis (strain mc(2)4517), and abrogates the toxic effects of PhoH2 in M.smegmatis strain mc(2)155. The polypeptide is Probable antitoxin PhoAT (Mycobacterium tuberculosis (strain ATCC 25618 / H37Rv)).